Here is a 384-residue protein sequence, read N- to C-terminus: Flap endonuclease 1 (384 aa).

Residues 1 to 105 (MGIKKLTDLI…GELAKRQARR (105 aa)) form an N-domain region. Asp-34 contributes to the Mg(2+) binding site. Arg-71 serves as a coordination point for DNA. Residues Asp-87, Glu-159, Glu-161, Asp-180, and Asp-182 each contribute to the Mg(2+) site. An I-domain region spans residues 123 to 254 (EVQKFAKRVI…KRAIELIQKH (132 aa)). Glu-159 provides a ligand contact to DNA. Gly-232 and Asp-234 together coordinate DNA. Asp-234 serves as a coordination point for Mg(2+). The segment at 338–346 (VQSRMDSFI) is interaction with PCNA. The tract at residues 349 to 384 (IKKPEDPNDKKKKVTKTPSKPSAKTSKKSSSTFKRK) is disordered. Low complexity predominate over residues 364-384 (KTPSKPSAKTSKKSSSTFKRK).

This sequence belongs to the XPG/RAD2 endonuclease family. FEN1 subfamily. As to quaternary structure, interacts with PCNA. Three molecules of repg bind to one PCNA trimer with each molecule binding to one PCNA monomer. PCNA stimulates the nuclease activity without altering cleavage specificity. It depends on Mg(2+) as a cofactor. Post-translationally, phosphorylated. Phosphorylation upon DNA damage induces relocalization to the nuclear plasma.

It localises to the nucleus. Its subcellular location is the nucleolus. It is found in the nucleoplasm. The protein resides in the mitochondrion. Its function is as follows. Structure-specific nuclease with 5'-flap endonuclease and 5'-3' exonuclease activities involved in DNA replication and repair. During DNA replication, cleaves the 5'-overhanging flap structure that is generated by displacement synthesis when DNA polymerase encounters the 5'-end of a downstream Okazaki fragment. It enters the flap from the 5'-end and then tracks to cleave the flap base, leaving a nick for ligation. Also involved in the long patch base excision repair (LP-BER) pathway, by cleaving within the apurinic/apyrimidinic (AP) site-terminated flap. Acts as a genome stabilization factor that prevents flaps from equilibrating into structures that lead to duplications and deletions. Also possesses 5'-3' exonuclease activity on nicked or gapped double-stranded DNA, and exhibits RNase H activity. Also involved in replication and repair of rDNA and in repairing mitochondrial DNA. In Dictyostelium discoideum (Social amoeba), this protein is Flap endonuclease 1.